The following is a 56-amino-acid chain: Large ribosomal subunit protein bL32 (56 aa).

This sequence belongs to the bacterial ribosomal protein bL32 family.

The chain is Large ribosomal subunit protein bL32 from Edwardsiella ictaluri (strain 93-146).